A 429-amino-acid chain; its full sequence is Ribosomal RNA small subunit methyltransferase B (429 aa).

S-adenosyl-L-methionine-binding positions include 254-260, D277, D303, and D322; that span reads CAAPGGK. The active-site Nucleophile is C375.

This sequence belongs to the class I-like SAM-binding methyltransferase superfamily. RsmB/NOP family.

It is found in the cytoplasm. The catalysed reaction is cytidine(967) in 16S rRNA + S-adenosyl-L-methionine = 5-methylcytidine(967) in 16S rRNA + S-adenosyl-L-homocysteine + H(+). Functionally, specifically methylates the cytosine at position 967 (m5C967) of 16S rRNA. The chain is Ribosomal RNA small subunit methyltransferase B from Escherichia coli (strain SMS-3-5 / SECEC).